The following is a 182-amino-acid chain: Large ribosomal subunit protein uL16 (182 aa).

Belongs to the universal ribosomal protein uL16 family.

This chain is Large ribosomal subunit protein uL16, found in Pyrobaculum arsenaticum (strain DSM 13514 / JCM 11321 / PZ6).